We begin with the raw amino-acid sequence, 211 residues long: MFITIEGMDGSGKTTALQRVKQYLEDLNYKVVMTREPGGLPLSEKIRELILNKDGVGMEPWTEALLFIAARKEHLEKVIKPYLKKGYIVISDRFMDSTTAYQGGARGLGVDYLNELQKNILEGFLPDLTLYFELSFEDAEKRLSARPEEKNRLDEEGRKFKEAVKLAFEELVVKEPNRITVIDASKSPEEVFEETKKVILEKIELWKKEKR.

Position 7-14 (7-14) interacts with ATP; the sequence is GMDGSGKT.

It belongs to the thymidylate kinase family.

The enzyme catalyses dTMP + ATP = dTDP + ADP. Functionally, phosphorylation of dTMP to form dTDP in both de novo and salvage pathways of dTTP synthesis. The protein is Thymidylate kinase of Mesoplasma florum (strain ATCC 33453 / NBRC 100688 / NCTC 11704 / L1) (Acholeplasma florum).